A 330-amino-acid polypeptide reads, in one-letter code: ATP-dependent (S)-NAD(P)H-hydrate dehydratase (330 aa).

The YjeF C-terminal domain occupies 36–327 (VIPLVRNTIP…QEINSAFKKL (292 aa)). Residues Gly136 and 189–195 (NFMEFTR) contribute to the (6S)-NADPHX site. ATP contacts are provided by residues 229–233 (KGEED) and 248–257 (GSGRRCGGQG). Asp258 is a (6S)-NADPHX binding site.

The protein belongs to the NnrD/CARKD family. Mg(2+) is required as a cofactor.

It carries out the reaction (6S)-NADHX + ATP = ADP + phosphate + NADH + H(+). It catalyses the reaction (6S)-NADPHX + ATP = ADP + phosphate + NADPH + H(+). Its function is as follows. Catalyzes the dehydration of the S-form of NAD(P)HX at the expense of ATP, which is converted to ADP. Together with NAD(P)HX epimerase, which catalyzes the epimerization of the S- and R-forms, the enzyme allows the repair of both epimers of NAD(P)HX, a damaged form of NAD(P)H that is a result of enzymatic or heat-dependent hydration. The protein is ATP-dependent (S)-NAD(P)H-hydrate dehydratase of Danio rerio (Zebrafish).